Here is a 460-residue protein sequence, read N- to C-terminus: tRNA modification GTPase MnmE (460 aa).

(6S)-5-formyl-5,6,7,8-tetrahydrofolate is bound by residues Arg-23, Glu-86, and Arg-126. The 160-residue stretch at 222–381 folds into the TrmE-type G domain; the sequence is GLSTAIIGRP…LEAAIASLFF (160 aa). Asn-232 serves as a coordination point for K(+). GTP-binding positions include 232–237, 251–257, and 276–279; these read NVGKSS, TDIAGTT, and DTAG. A Mg(2+)-binding site is contributed by Ser-236. K(+) is bound by residues Thr-251, Ile-253, and Thr-256. Thr-257 is a binding site for Mg(2+). Position 460 (Lys-460) interacts with (6S)-5-formyl-5,6,7,8-tetrahydrofolate.

It belongs to the TRAFAC class TrmE-Era-EngA-EngB-Septin-like GTPase superfamily. TrmE GTPase family. In terms of assembly, homodimer. Heterotetramer of two MnmE and two MnmG subunits. It depends on K(+) as a cofactor.

Its subcellular location is the cytoplasm. Exhibits a very high intrinsic GTPase hydrolysis rate. Involved in the addition of a carboxymethylaminomethyl (cmnm) group at the wobble position (U34) of certain tRNAs, forming tRNA-cmnm(5)s(2)U34. The protein is tRNA modification GTPase MnmE of Exiguobacterium sibiricum (strain DSM 17290 / CCUG 55495 / CIP 109462 / JCM 13490 / 255-15).